The following is a 651-amino-acid chain: Choline transporter-like protein 1 (651 aa).

The Cytoplasmic portion of the chain corresponds to 1-25 (MGCCGSTQNSKRDWRPLEEHSCTDI). A helical membrane pass occupies residues 26–46 (PWLLLFILFCVGMGFICGFSI). At 47–208 (ATGAASRLVF…RLISGVMTSK (162 aa)) the chain is on the extracellular side. 2 N-linked (GlcNAc...) asparagine glycosylation sites follow: Asn131 and Asn176. The chain crosses the membrane as a helical span at residues 209–229 (EIIMGLCLLSLVLSMILMVII). Topologically, residues 230 to 234 (RYISR) are cytoplasmic. A helical transmembrane segment spans residues 235-255 (VLVWIITILVVLGSLGGTGVL). Over 256-284 (WWLYADNKKSLNENLPPDQLQVSKDNLQA) the chain is Extracellular. Residues 285 to 305 (LLVYAIAATVFTVILLLMMLI) traverse the membrane as a helical segment. Topologically, residues 306–311 (MRKRVA) are cytoplasmic. Residues 312–332 (LTIALFNVAGKVFIHLPLLVF) form a helical membrane-spanning segment. Residues 333-334 (QP) lie on the Extracellular side of the membrane. The helical transmembrane segment at 335–355 (FWTFFALLLFWVYWVMVLLFL) threads the bilayer. Topologically, residues 356–376 (GTAGDPFTNEQGFVEFRINGP) are cytoplasmic. The helical transmembrane segment at 377–397 (LQYMWWYHLVGLIWISEFILA) threads the bilayer. Residues 398–438 (CQQMTIAGAVVTYYFTRNKNDLPFTPILASVNRLIRYHLGT) are Extracellular-facing. The helical transmembrane segment at 439–459 (VAKGAFIITLVKIPRMILMYI) threads the bilayer. The Cytoplasmic segment spans residues 460 to 533 (HSQLKGKENA…RVAAINTVGD (74 aa)). Residues 534–554 (FMLFLGKILIVSCTGLAGIML) traverse the membrane as a helical segment. At 555 to 562 (LNYQRDYT) the chain is on the extracellular side. Residues 563-583 (VWVLPLIIVCLFAFLVAHCFL) form a helical membrane-spanning segment. At 584–651 (SIYEMVVDVL…KPMASGTSTA (68 aa)) the chain is on the cytoplasmic side. Residues 629 to 651 (LKEPGSTAEGRELKPMASGTSTA) are disordered.

This sequence belongs to the CTL (choline transporter-like) family.

The protein localises to the cell membrane. Its subcellular location is the mitochondrion outer membrane. It catalyses the reaction choline(out) + n H(+)(in) = choline(in) + n H(+)(out). It carries out the reaction ethanolamine(out) + n H(+)(in) = ethanolamine(in) + n H(+)(out). Functionally, choline/H+ antiporter. Also acts as a high-affinity ethanolamine/H+ antiporter, regulating the supply of extracellular ethanolamine (Etn) for the CDP-Etn pathway, redistribute intracellular Etn and balance the CDP-Cho and CDP-Etn arms of the Kennedy pathway. Involved in membrane synthesis and myelin production. This chain is Choline transporter-like protein 1 (slc44a1), found in Xenopus laevis (African clawed frog).